Here is a 453-residue protein sequence, read N- to C-terminus: Protein LIAT1 (453 aa).

Residues 1–152 (METRGPGLAV…HLPSDSSTVS (152 aa)) are disordered. The interval 82-103 (KRKVKKKKRKKKTKGSGKGDDK) is lysine-rich domain. Basic residues predominate over residues 83-96 (RKVKKKKRKKKTKG). Positions 106–117 (SQSLKSQPLSSS) are enriched in low complexity. Residues 125–145 (CKERGPKPEHRQSKVEKKHLP) show a composition bias toward basic and acidic residues. An interaction with ATE1 region spans residues 145–197 (PSDSSTVSLPDFAEIENLANRINESLRWDGILADPEAEKERIRIYKLNRRKRY). Repeat copies occupy residues 201 to 210 (ALKGFHPDPE), 211 to 220 (ALKGFHPDPD), 221 to 230 (ALKGFHPDPE), 231 to 240 (ALKGFHPDPE), 241 to 250 (ALKGFHPDPE), 251 to 260 (ALKGFHPDPE), 261 to 270 (ALKGIHPDPE), 271 to 280 (ALKGIHPDPE), 281 to 290 (ALKGFHPDPE), 291 to 300 (ALKGFHPDPE), 301 to 310 (ALKGFHTDPE), 311 to 320 (ALKGFHIDPE), 321 to 330 (ALKGFHPDPK), 331 to 340 (ALKGFHPDPK), 341 to 350 (ALKGFHTDPE), 351 to 360 (ALKGFHPDPK), 361 to 370 (ALKGFHPDPE), 371 to 380 (ALKGFHPDPE), 381 to 390 (ALKGFHPDPE), and 391 to 400 (ALKGFHTDPN). The interval 201 to 400 (ALKGFHPDPE…ALKGFHTDPN (200 aa)) is 20 X 10 AA approximate tandem repeat of A-L-K-G-F-H-P-D-P-E. Disordered stretches follow at residues 225–306 (FHPD…KGFH) and 320–432 (EALK…CPNL). Residues 320–396 (EALKGFHPDP…PDPEALKGFH (77 aa)) show a composition bias toward basic and acidic residues.

Self-associates (via Lys-rich domain); targets LIAT1 to the nucleolus. Interacts with ATE1; it is not a substrate of ATE1, the interaction takes place in the cytoplasm and seems to increase ATE1 arginyltransferase activity. Interacts with JMJD6 and MRPS14. Post-translationally, post-translationally modified by JMJD6 lysyl-hydroxylase activity at its Lys-rich domain, which inhibits its self-association and nucleolar localization.

The protein resides in the nucleus. Its subcellular location is the nucleolus. It is found in the cytoplasm. Participates in nucleolar liquid-liquid phase separation (LLPS) through its N-terminal intrinsically disordered region (IDR). May be involved in ATE1-mediated N-terminal arginylation. The chain is Protein LIAT1 from Homo sapiens (Human).